The primary structure comprises 327 residues: Undecaprenyl-phosphate 4-deoxy-4-formamido-L-arabinose transferase (327 aa).

The next 2 helical transmembrane spans lie at 236–256 and 270–290; these read LSLV…LLVV and VFTL…GMGL.

This sequence belongs to the glycosyltransferase 2 family.

It is found in the cell inner membrane. The enzyme catalyses UDP-4-deoxy-4-formamido-beta-L-arabinose + di-trans,octa-cis-undecaprenyl phosphate = 4-deoxy-4-formamido-alpha-L-arabinopyranosyl di-trans,octa-cis-undecaprenyl phosphate + UDP. It participates in glycolipid biosynthesis; 4-amino-4-deoxy-alpha-L-arabinose undecaprenyl phosphate biosynthesis; 4-amino-4-deoxy-alpha-L-arabinose undecaprenyl phosphate from UDP-4-deoxy-4-formamido-beta-L-arabinose and undecaprenyl phosphate: step 1/2. It functions in the pathway bacterial outer membrane biogenesis; lipopolysaccharide biosynthesis. Catalyzes the transfer of 4-deoxy-4-formamido-L-arabinose from UDP to undecaprenyl phosphate. The modified arabinose is attached to lipid A and is required for resistance to polymyxin and cationic antimicrobial peptides. This chain is Undecaprenyl-phosphate 4-deoxy-4-formamido-L-arabinose transferase, found in Yersinia enterocolitica serotype O:8 / biotype 1B (strain NCTC 13174 / 8081).